The primary structure comprises 336 residues: Tetraacyldisaccharide 4'-kinase (336 aa).

60 to 67 (TVGGTGKT) contacts ATP.

This sequence belongs to the LpxK family.

It carries out the reaction a lipid A disaccharide + ATP = a lipid IVA + ADP + H(+). Its pathway is glycolipid biosynthesis; lipid IV(A) biosynthesis; lipid IV(A) from (3R)-3-hydroxytetradecanoyl-[acyl-carrier-protein] and UDP-N-acetyl-alpha-D-glucosamine: step 6/6. Transfers the gamma-phosphate of ATP to the 4'-position of a tetraacyldisaccharide 1-phosphate intermediate (termed DS-1-P) to form tetraacyldisaccharide 1,4'-bis-phosphate (lipid IVA). This Pseudomonas fluorescens (strain SBW25) protein is Tetraacyldisaccharide 4'-kinase.